The following is an 889-amino-acid chain: Heat shock protein 70 homolog LHS1 (889 aa).

An N-terminal signal peptide occupies residues methionine 1 to alanine 15. 7 N-linked (GlcNAc...) asparagine glycosylation sites follow: asparagine 111, asparagine 366, asparagine 462, asparagine 502, asparagine 515, asparagine 716, and asparagine 752. The interval isoleucine 811–leucine 889 is disordered. 2 stretches are compositionally biased toward acidic residues: residues asparagine 820–glutamate 833 and aspartate 868–leucine 889. Residues aspartate 886–leucine 889 carry the Prevents secretion from ER motif.

It belongs to the heat shock protein 70 family.

The protein localises to the endoplasmic reticulum lumen. The catalysed reaction is ATP + H2O = ADP + phosphate + H(+). In terms of biological role, chaperone required for protein translocation and folding in the endoplasmic reticulum. This is Heat shock protein 70 homolog LHS1 (LHS1) from Candida glabrata (strain ATCC 2001 / BCRC 20586 / JCM 3761 / NBRC 0622 / NRRL Y-65 / CBS 138) (Yeast).